The sequence spans 384 residues: DNA replication and repair protein RecF (384 aa).

Gly-43–Thr-50 provides a ligand contact to ATP.

The protein belongs to the RecF family.

It localises to the cytoplasm. Its function is as follows. The RecF protein is involved in DNA metabolism; it is required for DNA replication and normal SOS inducibility. RecF binds preferentially to single-stranded, linear DNA. It also seems to bind ATP. In Brucella abortus (strain 2308), this protein is DNA replication and repair protein RecF.